A 392-amino-acid chain; its full sequence is Nicotinate phosphoribosyltransferase (392 aa).

H214 is modified (phosphohistidine; by autocatalysis).

Belongs to the NAPRTase family. Post-translationally, transiently phosphorylated on a His residue during the reaction cycle. Phosphorylation strongly increases the affinity for substrates and increases the rate of nicotinate D-ribonucleotide production. Dephosphorylation regenerates the low-affinity form of the enzyme, leading to product release.

The catalysed reaction is nicotinate + 5-phospho-alpha-D-ribose 1-diphosphate + ATP + H2O = nicotinate beta-D-ribonucleotide + ADP + phosphate + diphosphate. The protein operates within cofactor biosynthesis; NAD(+) biosynthesis; nicotinate D-ribonucleotide from nicotinate: step 1/1. In terms of biological role, catalyzes the synthesis of beta-nicotinate D-ribonucleotide from nicotinate and 5-phospho-D-ribose 1-phosphate at the expense of ATP. This chain is Nicotinate phosphoribosyltransferase, found in Xanthomonas euvesicatoria pv. vesicatoria (strain 85-10) (Xanthomonas campestris pv. vesicatoria).